The following is a 134-amino-acid chain: NADH-quinone oxidoreductase subunit A (134 aa).

The next 3 membrane-spanning stretches (helical) occupy residues phenylalanine 12–leucine 32, phenylalanine 64–tryptophan 84, and tryptophan 93–leucine 113.

This sequence belongs to the complex I subunit 3 family. As to quaternary structure, NDH-1 is composed of 14 different subunits. Subunits NuoA, H, J, K, L, M, N constitute the membrane sector of the complex.

The protein localises to the cell inner membrane. The enzyme catalyses a quinone + NADH + 5 H(+)(in) = a quinol + NAD(+) + 4 H(+)(out). NDH-1 shuttles electrons from NADH, via FMN and iron-sulfur (Fe-S) centers, to quinones in the respiratory chain. The immediate electron acceptor for the enzyme in this species is believed to be ubiquinone. Couples the redox reaction to proton translocation (for every two electrons transferred, four hydrogen ions are translocated across the cytoplasmic membrane), and thus conserves the redox energy in a proton gradient. The protein is NADH-quinone oxidoreductase subunit A of Aeromonas salmonicida (strain A449).